We begin with the raw amino-acid sequence, 496 residues long: L-arabinose isomerase (496 aa).

Residues Glu306, Glu331, His348, and His447 each contribute to the Mn(2+) site.

This sequence belongs to the arabinose isomerase family. Mn(2+) is required as a cofactor.

It carries out the reaction beta-L-arabinopyranose = L-ribulose. It participates in carbohydrate degradation; L-arabinose degradation via L-ribulose; D-xylulose 5-phosphate from L-arabinose (bacterial route): step 1/3. In terms of biological role, catalyzes the conversion of L-arabinose to L-ribulose. The chain is L-arabinose isomerase from Geobacillus kaustophilus (strain HTA426).